Here is a 439-residue protein sequence, read N- to C-terminus: Tol-Pal system protein TolB (439 aa).

The first 22 residues, Met-1 to Thr-22, serve as a signal peptide directing secretion.

This sequence belongs to the TolB family. The Tol-Pal system is composed of five core proteins: the inner membrane proteins TolA, TolQ and TolR, the periplasmic protein TolB and the outer membrane protein Pal. They form a network linking the inner and outer membranes and the peptidoglycan layer.

The protein resides in the periplasm. In terms of biological role, part of the Tol-Pal system, which plays a role in outer membrane invagination during cell division and is important for maintaining outer membrane integrity. In Xylella fastidiosa (strain M12), this protein is Tol-Pal system protein TolB.